The primary structure comprises 47 residues: Delta-actitoxin-Axm1e (47 aa).

3 cysteine pairs are disulfide-bonded: Cys-4-Cys-44, Cys-6-Cys-34, and Cys-27-Cys-45.

It belongs to the sea anemone sodium channel inhibitory toxin family. Type I subfamily.

The protein resides in the secreted. It localises to the nematocyst. Its function is as follows. Binds specifically to voltage-gated sodium channels (Nav), thereby delaying their inactivation. This toxin is active on a variety of voltage-gated sodium channels (Nav1.1/SCN1A, Nav1.2/SCN2A, Nav1.3/SCN3A, Nav1.4/SCN4A, Nav1.5/SCN5A and Nav1.6/SCN8A). The sequence is that of Delta-actitoxin-Axm1e from Anthopleura xanthogrammica (Giant green sea anemone).